Reading from the N-terminus, the 179-residue chain is Nucleoside-triphosphatase THEP1 (179 aa).

Residues 7-14 (GRPGVGKT) and 94-101 (LIIVDEIG) each bind ATP.

It belongs to the THEP1 NTPase family.

It carries out the reaction a ribonucleoside 5'-triphosphate + H2O = a ribonucleoside 5'-diphosphate + phosphate + H(+). Has nucleotide phosphatase activity towards ATP, GTP, CTP, TTP and UTP. May hydrolyze nucleoside diphosphates with lower efficiency. The sequence is that of Nucleoside-triphosphatase THEP1 from Thermotoga petrophila (strain ATCC BAA-488 / DSM 13995 / JCM 10881 / RKU-1).